We begin with the raw amino-acid sequence, 95 residues long: Aspartyl/glutamyl-tRNA(Asn/Gln) amidotransferase subunit C (95 aa).

Belongs to the GatC family. In terms of assembly, heterotrimer of A, B and C subunits.

It carries out the reaction L-glutamyl-tRNA(Gln) + L-glutamine + ATP + H2O = L-glutaminyl-tRNA(Gln) + L-glutamate + ADP + phosphate + H(+). It catalyses the reaction L-aspartyl-tRNA(Asn) + L-glutamine + ATP + H2O = L-asparaginyl-tRNA(Asn) + L-glutamate + ADP + phosphate + 2 H(+). Its function is as follows. Allows the formation of correctly charged Asn-tRNA(Asn) or Gln-tRNA(Gln) through the transamidation of misacylated Asp-tRNA(Asn) or Glu-tRNA(Gln) in organisms which lack either or both of asparaginyl-tRNA or glutaminyl-tRNA synthetases. The reaction takes place in the presence of glutamine and ATP through an activated phospho-Asp-tRNA(Asn) or phospho-Glu-tRNA(Gln). In Prochlorococcus marinus (strain NATL2A), this protein is Aspartyl/glutamyl-tRNA(Asn/Gln) amidotransferase subunit C.